A 219-amino-acid polypeptide reads, in one-letter code: MGFIYDWSEERLEIQSIADDILSKFVPSHVNIFYCFGGIVLTAFIFQGASGFALTIYYRPTVVEAFSSIQLILYHVNLGWFIRSIHRWSSGCMVLVLILHISRVYLTGGFKKPRELTWISGVILAVVTVSFGVTGYSLPWDQIGYWACKIVTAVPEALDDLLPGAGKLLVLTLRGGFSVGQTTLTRLYSIHTFVLPLVTLVLLIVHFSLLRKQGISGPL.

A helical membrane pass occupies residues Ile-32 to Phe-52. Residue Cys-35 coordinates heme c. Positions 86 and 100 each coordinate heme b. The next 3 helical transmembrane spans lie at Ser-90 to Phe-110, Leu-116 to Tyr-136, and Ile-190 to Leu-210. 2 residues coordinate heme b: His-191 and His-206.

It belongs to the cytochrome b family. PetB subfamily. As to quaternary structure, the 4 large subunits of the cytochrome b6-f complex are cytochrome b6, subunit IV (17 kDa polypeptide, PetD), cytochrome f and the Rieske protein, while the 4 small subunits are PetG, PetL, PetM and PetN. The complex functions as a dimer. It depends on heme b as a cofactor. The cofactor is heme c.

It localises to the plastid. It is found in the chloroplast thylakoid membrane. Component of the cytochrome b6-f complex, which mediates electron transfer between photosystem II (PSII) and photosystem I (PSI), cyclic electron flow around PSI, and state transitions. The chain is Cytochrome b6 from Heterocapsa triquetra (Dinoflagellate).